The chain runs to 445 residues: Glycine--tRNA ligase (445 aa).

Arg-97 and Glu-145 together coordinate substrate. Residues 177-179 (RNE), 187-192 (FRTCEF), 262-263 (EV), and 308-311 (GLTR) each bind ATP. 192-196 (FEQME) serves as a coordination point for substrate. Substrate is bound at residue 304-308 (ETSAG).

The protein belongs to the class-II aminoacyl-tRNA synthetase family. Homodimer.

It is found in the cytoplasm. It catalyses the reaction tRNA(Gly) + glycine + ATP = glycyl-tRNA(Gly) + AMP + diphosphate. Functionally, catalyzes the attachment of glycine to tRNA(Gly). This is Glycine--tRNA ligase from Borrelia garinii subsp. bavariensis (strain ATCC BAA-2496 / DSM 23469 / PBi) (Borreliella bavariensis).